The following is a 542-amino-acid chain: CTP synthase (542 aa).

The segment at 1-265 (MARYVFITGG…DSEVLAAFGI (265 aa)) is amidoligase domain. Residue serine 13 coordinates CTP. Serine 13 is a binding site for UTP. 14 to 19 (SLGKGI) provides a ligand contact to ATP. Residue tyrosine 54 participates in L-glutamine binding. Aspartate 71 is an ATP binding site. The Mg(2+) site is built by aspartate 71 and glutamate 139. CTP is bound by residues 146-148 (DIE), 186-191 (KTKPTQ), and lysine 222. Residues 186-191 (KTKPTQ) and lysine 222 contribute to the UTP site. One can recognise a Glutamine amidotransferase type-1 domain in the interval 291 to 541 (TIAIVGKYTG…IAAAVEQSRL (251 aa)). Glycine 353 is a binding site for L-glutamine. Residue cysteine 380 is the Nucleophile; for glutamine hydrolysis of the active site. Residues 381–384 (FGMQ), glutamate 404, and arginine 469 contribute to the L-glutamine site. Residues histidine 514 and glutamate 516 contribute to the active site.

The protein belongs to the CTP synthase family. Homotetramer.

It carries out the reaction UTP + L-glutamine + ATP + H2O = CTP + L-glutamate + ADP + phosphate + 2 H(+). It catalyses the reaction L-glutamine + H2O = L-glutamate + NH4(+). The catalysed reaction is UTP + NH4(+) + ATP = CTP + ADP + phosphate + 2 H(+). It participates in pyrimidine metabolism; CTP biosynthesis via de novo pathway; CTP from UDP: step 2/2. Its activity is regulated as follows. Allosterically activated by GTP, when glutamine is the substrate; GTP has no effect on the reaction when ammonia is the substrate. The allosteric effector GTP functions by stabilizing the protein conformation that binds the tetrahedral intermediate(s) formed during glutamine hydrolysis. Inhibited by the product CTP, via allosteric rather than competitive inhibition. Its function is as follows. Catalyzes the ATP-dependent amination of UTP to CTP with either L-glutamine or ammonia as the source of nitrogen. Regulates intracellular CTP levels through interactions with the four ribonucleotide triphosphates. This chain is CTP synthase, found in Chelativorans sp. (strain BNC1).